Consider the following 185-residue polypeptide: CASP-like protein 5A1 (185 aa).

Residues 1–45 lie on the Cytoplasmic side of the membrane; the sequence is MNVSHPAVHPVGVPPALGGHAVPPRMRMRVRMEYLVFQGMPLPGT. Residues 46–66 form a helical membrane-spanning segment; that stretch reads LGGLVLRLGQFCSALIAFSVM. At 67-76 the chain is on the extracellular side; the sequence is LSVRDFSVTA. Residues 77-97 form a helical membrane-spanning segment; sequence FCYLVAATVLQCLWSLAMAVI. Over 98 to 121 the chain is Cytoplasmic; that stretch reads DVYALLVKRSLRNPLLVSIFVVGD. The helical transmembrane segment at 122–142 threads the bilayer; that stretch reads GVTATLTFAAACASAGVIVLI. The Extracellular segment spans residues 143–160; that stretch reads GNDIAMCKDNPCANYEAA. Residues 161 to 181 traverse the membrane as a helical segment; the sequence is IIMAFLSWFMVSISFILTFWL. Topologically, residues 182-185 are cytoplasmic; the sequence is LATL.

It belongs to the Casparian strip membrane proteins (CASP) family. As to quaternary structure, homodimer and heterodimers.

Its subcellular location is the cell membrane. This is CASP-like protein 5A1 from Picea sitchensis (Sitka spruce).